A 32-amino-acid chain; its full sequence is Giant hemoglobin AIV chain (32 aa).

It belongs to the globin family. In terms of assembly, giant hemoglobin is composed of four heme-containing chains (AI to AIV), and two linker chains (AV and AVI).

The sequence is that of Giant hemoglobin AIV chain from Lamellibrachia sp. (Deep-sea giant tube worm).